Here is an 88-residue protein sequence, read N- to C-terminus: Electron transfer flavoprotein regulatory factor 1 (88 aa).

This sequence belongs to the complex I LYR family. In terms of assembly, homotetramer. Interacts with NDUFAB1. Interacts with ETFA. Interacts with ETFB.

The protein localises to the mitochondrion. Its function is as follows. Acts as a regulator of the electron transfer flavoprotein by promoting the removal of flavin from the ETF holoenzyme (composed of ETFA and ETFB). The chain is Electron transfer flavoprotein regulatory factor 1 from Bos taurus (Bovine).